We begin with the raw amino-acid sequence, 189 residues long: MTKLIVGLGNPGSKYHETKHNVGFMALDRIVKPLNVQFTENKTFKAETVATFINGEKIYFIKPTTFMNASGLAVRAFLAYYNLTVEDLIVIYDDLDMEVGKIRFRQKGSAGGHNGIKSIIKEIGTQEFDRIKIGIGRPKDKMTVVNYVLGKFDKKDEITIFNTLDKVDKAVNYYLQTKNFEQTMQKFNG.

TRNA is bound at residue tyrosine 15. The active-site Proton acceptor is histidine 20. Residues phenylalanine 66, asparagine 68, and asparagine 114 each contribute to the tRNA site.

Belongs to the PTH family. Monomer.

The protein resides in the cytoplasm. It catalyses the reaction an N-acyl-L-alpha-aminoacyl-tRNA + H2O = an N-acyl-L-amino acid + a tRNA + H(+). In terms of biological role, hydrolyzes ribosome-free peptidyl-tRNAs (with 1 or more amino acids incorporated), which drop off the ribosome during protein synthesis, or as a result of ribosome stalling. Catalyzes the release of premature peptidyl moieties from peptidyl-tRNA molecules trapped in stalled 50S ribosomal subunits, and thus maintains levels of free tRNAs and 50S ribosomes. The protein is Peptidyl-tRNA hydrolase of Streptococcus mutans serotype c (strain ATCC 700610 / UA159).